Here is a 320-residue protein sequence, read N- to C-terminus: uncharacterized protein (320 aa).

Residues 1 to 40 (MDHPSTSSLPRKKVKAGVKKAGKKTGKKTTGKKKTTPSAI) are disordered. Basic residues predominate over residues 10 to 35 (PRKKVKAGVKKAGKKTGKKTTGKKKT). Residues 51 to 71 (LLVLLAVLSYLAALSLGLYIM) traverse the membrane as a helical segment. 4 N-linked (GlcNAc...) asparagine glycosylation sites follow: Asn-92, Asn-122, Asn-154, and Asn-167. 2 consecutive transmembrane segments (helical) span residues 186 to 206 (PLVH…AMTG) and 216 to 236 (MLVT…VTVL). N-linked (GlcNAc...) asparagine glycosylation is present at Asn-247. Residues 272-292 (VQGALVAIVAVFYLTMGVVFV) traverse the membrane as a helical segment.

Its subcellular location is the membrane. Its pathway is secondary metabolite biosynthesis; terpenoid biosynthesis. Functionally, part of the gene cluster that mediates the biosynthesis of an ophiobolin family sesterterpenoid. This is an uncharacterized protein from Aspergillus terreus.